The following is a 337-amino-acid chain: 4-hydroxyproline 2-epimerase 2 (337 aa).

The active-site Proton acceptor is the Cys-90. Substrate is bound by residues 91–92 (GH), His-223, and Asp-249. Cys-253 (proton donor) is an active-site residue. 254–255 (GT) serves as a coordination point for substrate.

It belongs to the proline racemase family.

It catalyses the reaction trans-4-hydroxy-L-proline = cis-4-hydroxy-D-proline. Functionally, catalyzes the epimerization of trans-4-hydroxy-L-proline (t4LHyp) to cis-4-hydroxy-D-proline (c4DHyp). Is likely involved in a degradation pathway that converts t4LHyp to alpha-ketoglutarate. Can also catalyze the epimerization of trans-3-hydroxy-L-proline (t3LHyp) to cis-3-hydroxy-D-proline (c3DHyp), albeit with 170-fold lower efficiency. Displays no proline racemase activity. This Brucella anthropi (strain ATCC 49188 / DSM 6882 / CCUG 24695 / JCM 21032 / LMG 3331 / NBRC 15819 / NCTC 12168 / Alc 37) (Ochrobactrum anthropi) protein is 4-hydroxyproline 2-epimerase 2.